Here is a 177-residue protein sequence, read N- to C-terminus: Endoribonuclease YbeY (177 aa).

Histidine 114, histidine 118, and histidine 124 together coordinate Zn(2+). The interval 154–177 (SYPEAIPTNPAPRRQASSSAGHIE) is disordered. Residues 168 to 177 (QASSSAGHIE) are compositionally biased toward polar residues.

The protein belongs to the endoribonuclease YbeY family. Zn(2+) is required as a cofactor.

Its subcellular location is the cytoplasm. Its function is as follows. Single strand-specific metallo-endoribonuclease involved in late-stage 70S ribosome quality control and in maturation of the 3' terminus of the 16S rRNA. In Cellvibrio japonicus (strain Ueda107) (Pseudomonas fluorescens subsp. cellulosa), this protein is Endoribonuclease YbeY.